The chain runs to 208 residues: Superoxide dismutase [Mn] 2 (208 aa).

Residues His28, His83, Asp165, and His169 each contribute to the Mn(2+) site.

The protein belongs to the iron/manganese superoxide dismutase family. As to quaternary structure, homodimer. It depends on Mn(2+) as a cofactor.

The enzyme catalyses 2 superoxide + 2 H(+) = H2O2 + O2. Its function is as follows. Destroys superoxide anion radicals which are normally produced within the cells and which are toxic to biological systems. The protein is Superoxide dismutase [Mn] 2 (sodA2) of Bacillus anthracis.